A 258-amino-acid polypeptide reads, in one-letter code: Coiled-coil domain-containing protein 127 (258 aa).

Residues 50–170 (KEIEKEKEAC…EEALAERQSI (121 aa)) adopt a coiled-coil conformation.

This is Coiled-coil domain-containing protein 127 (CCDC127) from Sus scrofa (Pig).